The primary structure comprises 371 residues: MAAAPVFFPSSVVVSVYRAHGYAFSCSSLLSQLPAIKLSSYRPTRTDHTAITLLPNSNRIASRLQAMQSPTFEVNGDGKTEEVEKLQKGIAEFYDESSGIWEEIWGDHMHHGFYDPGTTVSLADHRTAQIRMIEEALRFASVSDDPMKKPKRIVDVGCGIGGSSRYFARKYDAECKGITLSPVQAKRAQALAVAEGLQGTVSFEVADALAQPFPHGQFDLVWSMESGEHMPDKEKFVRELVRVAAPGATIIIVTWCHRDLSPSEHSLKPQEQKLLNKICDSYYLPAWCSTADYVKILESLFLEDIKRADWSEYVAPFWPAVIRSALTWKGFTSLIRSGWKTIKGAMVMPLMIEGFKKDVIKFSVITCRKPE.

Residues 1–65 (MAAAPVFFPS…NSNRIASRLQ (65 aa)) constitute a chloroplast transit peptide. Positions 153 to 162 (IVDVGCGIGG) are SAM motif I. The tract at residues 216 to 224 (GQFDLVWSM) is SAM motif II. Positions 243-252 (VAAPGATIII) are SAM motif III.

This sequence belongs to the class I-like SAM-binding methyltransferase superfamily. gTMT family. Homodimer.

It localises to the plastid. The protein resides in the chloroplast inner membrane. The enzyme catalyses picrinine + S-adenosyl-L-methionine = ervincine + S-adenosyl-L-homocysteine + H(+). Its pathway is alkaloid biosynthesis; vindoline biosynthesis. Its function is as follows. S-adenosyl-L-methionine-dependent N-methyltransferase involved in the biosynthesis of biologically active monoterpenoid indole alkaloids (MIAs) natural products including vindoline. Inactive with picrinine as substrate. This Catharanthus roseus (Madagascar periwinkle) protein is Gamma-tocopherol methyltransferase, chloroplastic.